The following is a 208-amino-acid chain: uncharacterized protein (208 aa).

Helical transmembrane passes span 5 to 25 (VIGI…KEAW), 41 to 61 (MLLI…IAAL), 69 to 89 (ANGI…LFFL), 123 to 143 (VLLG…ICGL), 150 to 170 (VFFF…TIAG), and 176 to 196 (NKLL…LVIY).

It is found in the cell membrane. This is an uncharacterized protein from Bacillus subtilis (strain 168).